The following is a 62-amino-acid chain: UPF0291 protein CLM_2971 (62 aa).

This sequence belongs to the UPF0291 family.

It is found in the cytoplasm. The protein is UPF0291 protein CLM_2971 of Clostridium botulinum (strain Kyoto / Type A2).